Consider the following 662-residue polypeptide: UvrABC system protein B (662 aa).

The 158-residue stretch at 31–188 (DNIEGGEKAQ…NDLVDIQFER (158 aa)) folds into the Helicase ATP-binding domain. 44 to 51 (GATGTGKT) provides a ligand contact to ATP. Residues 97 to 120 (YYDYYQPEAYVPSSDTYIEKDSSV) carry the Beta-hairpin motif. A Helicase C-terminal domain is found at 435 to 601 (QIDDLLGEIN…TIKKEIRDLI (167 aa)). The UVR domain maps to 626 to 661 (KELVKKLEKQMQEAVEVLDFELAAQIRDMMLEVKAL).

The protein belongs to the UvrB family. Forms a heterotetramer with UvrA during the search for lesions. Interacts with UvrC in an incision complex.

It localises to the cytoplasm. Its function is as follows. The UvrABC repair system catalyzes the recognition and processing of DNA lesions. A damage recognition complex composed of 2 UvrA and 2 UvrB subunits scans DNA for abnormalities. Upon binding of the UvrA(2)B(2) complex to a putative damaged site, the DNA wraps around one UvrB monomer. DNA wrap is dependent on ATP binding by UvrB and probably causes local melting of the DNA helix, facilitating insertion of UvrB beta-hairpin between the DNA strands. Then UvrB probes one DNA strand for the presence of a lesion. If a lesion is found the UvrA subunits dissociate and the UvrB-DNA preincision complex is formed. This complex is subsequently bound by UvrC and the second UvrB is released. If no lesion is found, the DNA wraps around the other UvrB subunit that will check the other stand for damage. The protein is UvrABC system protein B of Streptococcus pneumoniae serotype 19F (strain G54).